A 367-amino-acid chain; its full sequence is Glutamate 5-kinase (367 aa).

Lys-9 is a binding site for ATP. Residues Ser-49, Asp-136, and Asn-148 each coordinate substrate. ATP is bound by residues 168 to 169 (TD) and 210 to 216 (TGGMKSK). Positions 276–350 (SGQIEVDAGA…GMQSQDIQVR (75 aa)) constitute a PUA domain.

The protein belongs to the glutamate 5-kinase family.

It is found in the cytoplasm. The catalysed reaction is L-glutamate + ATP = L-glutamyl 5-phosphate + ADP. It participates in amino-acid biosynthesis; L-proline biosynthesis; L-glutamate 5-semialdehyde from L-glutamate: step 1/2. Functionally, catalyzes the transfer of a phosphate group to glutamate to form L-glutamate 5-phosphate. The protein is Glutamate 5-kinase of Bacillus cereus (strain G9842).